The following is a 158-amino-acid chain: Urease accessory protein UreE (158 aa).

It belongs to the UreE family.

It is found in the cytoplasm. Functionally, involved in urease metallocenter assembly. Binds nickel. Probably functions as a nickel donor during metallocenter assembly. The chain is Urease accessory protein UreE from Corynebacterium urealyticum (strain ATCC 43042 / DSM 7109).